The sequence spans 379 residues: Cytochrome-c peroxidase IdrP1 (379 aa).

An N-terminal signal peptide occupies residues methionine 1–alanine 24. Cytochrome c domains lie at glutamate 50 to lysine 158 and threonine 204 to serine 355. Cysteine 72, cysteine 75, histidine 76, cysteine 219, cysteine 222, and histidine 223 together coordinate heme c.

In terms of assembly, the iodate reductase (Idr) complex is composed of a molybdopterin-dependent iodate reductase (IdrA and IdrB subunits) and two associated peroxidases (IdrP1 and IdrP2). The cofactor is heme c.

It localises to the periplasm. It carries out the reaction 2 Fe(II)-[cytochrome c] + H2O2 + 2 H(+) = 2 Fe(III)-[cytochrome c] + 2 H2O. Its function is as follows. Involved in iodate respiration. Probably reduces the H(2)O(2) produced by IdrA/IdrB to H(2)O, using a reduced cytochrome c as the electron donor. This Pseudomonas sp. (strain SCT) protein is Cytochrome-c peroxidase IdrP1.